A 160-amino-acid chain; its full sequence is NADH-quinone oxidoreductase subunit I (160 aa).

4Fe-4S ferredoxin-type domains are found at residues 51–81 (LRRY…IEAA) and 91–120 (VRYD…EGPN). [4Fe-4S] cluster contacts are provided by cysteine 61, cysteine 64, cysteine 67, cysteine 71, cysteine 100, cysteine 103, cysteine 106, and cysteine 110.

It belongs to the complex I 23 kDa subunit family. NDH-1 is composed of 14 different subunits. Subunits NuoA, H, J, K, L, M, N constitute the membrane sector of the complex. The cofactor is [4Fe-4S] cluster.

The protein localises to the cell inner membrane. The enzyme catalyses a quinone + NADH + 5 H(+)(in) = a quinol + NAD(+) + 4 H(+)(out). Its function is as follows. NDH-1 shuttles electrons from NADH, via FMN and iron-sulfur (Fe-S) centers, to quinones in the respiratory chain. The immediate electron acceptor for the enzyme in this species is believed to be ubiquinone. Couples the redox reaction to proton translocation (for every two electrons transferred, four hydrogen ions are translocated across the cytoplasmic membrane), and thus conserves the redox energy in a proton gradient. This chain is NADH-quinone oxidoreductase subunit I, found in Anaplasma marginale (strain St. Maries).